Reading from the N-terminus, the 94-residue chain is Pyrimidine/purine nucleoside phosphorylase (94 aa).

Belongs to the nucleoside phosphorylase PpnP family.

The catalysed reaction is a purine D-ribonucleoside + phosphate = a purine nucleobase + alpha-D-ribose 1-phosphate. It carries out the reaction adenosine + phosphate = alpha-D-ribose 1-phosphate + adenine. It catalyses the reaction cytidine + phosphate = cytosine + alpha-D-ribose 1-phosphate. The enzyme catalyses guanosine + phosphate = alpha-D-ribose 1-phosphate + guanine. The catalysed reaction is inosine + phosphate = alpha-D-ribose 1-phosphate + hypoxanthine. It carries out the reaction thymidine + phosphate = 2-deoxy-alpha-D-ribose 1-phosphate + thymine. It catalyses the reaction uridine + phosphate = alpha-D-ribose 1-phosphate + uracil. The enzyme catalyses xanthosine + phosphate = alpha-D-ribose 1-phosphate + xanthine. Its function is as follows. Catalyzes the phosphorolysis of diverse nucleosides, yielding D-ribose 1-phosphate and the respective free bases. Can use uridine, adenosine, guanosine, cytidine, thymidine, inosine and xanthosine as substrates. Also catalyzes the reverse reactions. This is Pyrimidine/purine nucleoside phosphorylase from Salmonella heidelberg (strain SL476).